Consider the following 560-residue polypeptide: Protein NRT1/ PTR FAMILY 2.5 (560 aa).

Positions 1-20 (MADSKSGDTEVAHRSSDPSE) are disordered. The next 12 helical transmembrane spans lie at 34–54 (TLLG…VFLI), 77–97 (MLPV…PVIS), 101–121 (FISL…YLMP), 141–161 (ILYV…FTLA), 177–197 (FFNW…TAIV), 207–227 (LGFG…IAGV), 323–343 (AILR…PVAV), 372–392 (VIVL…IYPM), 404–424 (LQQV…SAVV), 441–461 (VLWL…HFPA), 480–500 (SLTS…IDVI), and 520–540 (YWVV…CSWF).

The protein belongs to the major facilitator superfamily. Proton-dependent oligopeptide transporter (POT/PTR) (TC 2.A.17) family. Expressed in the root epidermis or cortex.

It is found in the membrane. In terms of biological role, transporter involved in a passive nitrate efflux. The polypeptide is Protein NRT1/ PTR FAMILY 2.5 (NPF2.5) (Arabidopsis thaliana (Mouse-ear cress)).